The following is a 354-amino-acid chain: NADH-quinone oxidoreductase subunit H (354 aa).

The next 10 membrane-spanning stretches (helical) occupy residues 12–32 (LLGGFWPVVWNLIKIVALIAP), 62–82 (PWGLLTPIADAVKLIFKEIIL), 89–109 (GLFLLGPVMTIMPALAAWVVV), 124–144 (LLFLMAITSMEVYGVIIAGWA), 162–182 (VSYEIAMGFALVVVLMVSGTL), 203–223 (FLSWNWLPLFPIFIVYFISGL), 239–259 (EIVAGHMIEYSGMAFAMFFLA), 263–283 (NMILISALAVTMFLGGWLPPI), 291–311 (IPGWIWLGLKTFVVVTMFLWV), and 326–346 (LGWKIFIPITLIWLVVVGLWI).

It belongs to the complex I subunit 1 family. As to quaternary structure, NDH-1 is composed of 14 different subunits. Subunits NuoA, H, J, K, L, M, N constitute the membrane sector of the complex.

The protein resides in the cell inner membrane. It catalyses the reaction a quinone + NADH + 5 H(+)(in) = a quinol + NAD(+) + 4 H(+)(out). Its function is as follows. NDH-1 shuttles electrons from NADH, via FMN and iron-sulfur (Fe-S) centers, to quinones in the respiratory chain. The immediate electron acceptor for the enzyme in this species is believed to be ubiquinone. Couples the redox reaction to proton translocation (for every two electrons transferred, four hydrogen ions are translocated across the cytoplasmic membrane), and thus conserves the redox energy in a proton gradient. This subunit may bind ubiquinone. This chain is NADH-quinone oxidoreductase subunit H, found in Methylibium petroleiphilum (strain ATCC BAA-1232 / LMG 22953 / PM1).